A 436-amino-acid polypeptide reads, in one-letter code: 3-ketoacyl-CoA thiolase (436 aa).

Cysteine 99 serves as the catalytic Acyl-thioester intermediate. Residues histidine 392 and cysteine 422 each act as proton acceptor in the active site.

It belongs to the thiolase-like superfamily. Thiolase family. As to quaternary structure, heterotetramer of two alpha chains (FadJ) and two beta chains (FadI).

The protein localises to the cytoplasm. The catalysed reaction is an acyl-CoA + acetyl-CoA = a 3-oxoacyl-CoA + CoA. The protein operates within lipid metabolism; fatty acid beta-oxidation. Its function is as follows. Catalyzes the final step of fatty acid oxidation in which acetyl-CoA is released and the CoA ester of a fatty acid two carbons shorter is formed. This chain is 3-ketoacyl-CoA thiolase, found in Aeromonas salmonicida (strain A449).